The following is a 159-amino-acid chain: Putative ribosomal RNA large subunit methyltransferase H (159 aa).

Residues leucine 76, glycine 108, and 127-132 contribute to the S-adenosyl-L-methionine site; that span reads LSAMTF.

This sequence belongs to the RNA methyltransferase RlmH family.

The protein resides in the cytoplasm. It catalyses the reaction pseudouridine(1915) in 23S rRNA + S-adenosyl-L-methionine = N(3)-methylpseudouridine(1915) in 23S rRNA + S-adenosyl-L-homocysteine + H(+). Specifically methylates the pseudouridine at position 1915 (m3Psi1915) in 23S rRNA. The chain is Putative ribosomal RNA large subunit methyltransferase H from Methanospirillum hungatei JF-1 (strain ATCC 27890 / DSM 864 / NBRC 100397 / JF-1).